A 56-amino-acid chain; its full sequence is Large ribosomal subunit protein bL33A (56 aa).

The protein belongs to the bacterial ribosomal protein bL33 family.

This is Large ribosomal subunit protein bL33A from Sorangium cellulosum (strain So ce56) (Polyangium cellulosum (strain So ce56)).